Here is a 475-residue protein sequence, read N- to C-terminus: FAD-dependent monooxygenase penE (475 aa).

FAD-binding residues include glutamate 35, glycine 49, and arginine 108. Tyrosine 216 is a catalytic residue. FAD is bound by residues aspartate 308 and alanine 321. N-linked (GlcNAc...) asparagine glycosylation is present at asparagine 437. Residues 446 to 466 form a helical membrane-spanning segment; that stretch reads WGSIWLSPVILCLFCMLFLWP.

Belongs to the paxM FAD-dependent monooxygenase family. FAD is required as a cofactor.

The protein localises to the membrane. It carries out the reaction [(1'E)-3'-hydroxy-3',7'-dimethylocta-1',6'-dien-1'-yl]-quinolinone B + NADPH + O2 + H(+) = [(1'E)-5'-(3',3'-dimethyloxiran-2'-yl)-3'-hydroxy-3'-methylpent-1'-en-1'-yl]-quinolinone B + NADP(+) + H2O. It participates in secondary metabolite biosynthesis. The protein operates within alkaloid biosynthesis. Its pathway is mycotoxin biosynthesis. FAD-dependent monooxygenase; part of the gene cluster that mediates the biosynthesis of penigequinolones, potent insecticidal alkaloids that contain a highly modified 10-carbon prenyl group. The first stage is catalyzed by the nonribosomal peptide synthetase penN that condenses anthranilic acid and O-methyl-L-tyrosine to produce 4'-methoxycyclopeptin. 4'-methoxycyclopeptin is then converted to 4'-methoxydehydrocyclopeptin by the ketoglutarate-dependent dioxygenase penM through dehydrogenation to form a double bond between C-alpha and C-beta of the O-methyltyrosine side chain. PenM also converts its first product methoxydehydrocyclopeptin to 4'-methoxycyclopenin. The following conversion of 4'methoxycyclopenin into 4'-methoxyviridicatin is catalyzed by the cyclopenase penL. 4'-methoxyviridicatin is the precursor of quinolone natural products, and is further converted to quinolinone B. The prenyltransferase penI then catalyzes the canonical Friedel-Crafts alkylation of quinolinone B with dimethylallyl cation to yield dimethylallyl quinolone, which is subjected to FAD-dependent dehydrogenation by the FAD-linked oxidoreductase penH to yield conjugated aryl diene. The delta(3') double bond then serves as the site of the second alkylation with DMAPP catalyzed by the prenyltransferase penG to yield a carbenium ion intermediate, which can be attacked by H(2)O to yield a styrenyl quinolone containing a C3'-hydroxyprenyl chain, or undergo cyclization to yield yaequinolones J1 and J2. The conversion of the styrenyl quinolone into the tetrahydrofuran-containing yaequinolone C is performed by the FAD-dependent monooxygenase penE and involves epoxidation of the terminal C7'-C8' olefin, followed by epoxide ring opening initiated by the C3' hydroxyl group. The predicted cysteine hydrolase penJ acts as an epoxide hydrolase that enhances the rate of the 5-exo-tet cyclization step, increasing the yield of yaequinolone C. PenF catalyzes the cationic rearrangement of the epoxide formed by penE (before ring opening to produce yaequinolone C) into yaequinolone D. Finally, the short-chain dehydrogenase/reductase (SDR)-like reductase penD, catalyzes both the dehydration of yaequinolone D and the reduction of the resulting oxonium to yield penigequinolone. This is FAD-dependent monooxygenase penE from Penicillium thymicola.